The following is a 263-amino-acid chain: Shikimate dehydrogenase (NADP(+)) (263 aa).

Shikimate contacts are provided by residues 16 to 18 and T65; that span reads SKS. K69 serves as the catalytic Proton acceptor. Positions 90 and 105 each coordinate shikimate. NADP(+) is bound by residues 125–129 and L208; that span reads GSGGS. Shikimate is bound at residue Y210. An NADP(+)-binding site is contributed by G230.

This sequence belongs to the shikimate dehydrogenase family. Homodimer.

The catalysed reaction is shikimate + NADP(+) = 3-dehydroshikimate + NADPH + H(+). It functions in the pathway metabolic intermediate biosynthesis; chorismate biosynthesis; chorismate from D-erythrose 4-phosphate and phosphoenolpyruvate: step 4/7. Its function is as follows. Involved in the biosynthesis of the chorismate, which leads to the biosynthesis of aromatic amino acids. Catalyzes the reversible NADPH linked reduction of 3-dehydroshikimate (DHSA) to yield shikimate (SA). The protein is Shikimate dehydrogenase (NADP(+)) of Helicobacter pylori (strain G27).